The sequence spans 235 residues: TIR domain-containing adapter molecule 2 (235 aa).

Residues 1-39 are disordered; that stretch reads MGIGKSKINSCPLSLSWGKRHSVDTSPGYHESDSKKSED. Gly2 carries N-myristoyl glycine lipidation. Phosphoserine; by PKC/PRKCE is present on Ser16. A compositionally biased stretch (basic and acidic residues) spans 30-39; that stretch reads HESDSKKSED. In terms of domain architecture, TIR spans 73–229; that stretch reads AEEEVFLKFV…TIWKETRNMV (157 aa). Tyr167 is modified (phosphotyrosine).

As to quaternary structure, homodimer. Interacts with TLR4, TICAM1, IRF3 and IRF7 in response to LPS. Interacts with IL1R1, IL1RAP, IRAK2, IRAK3 and TRAF6. Interacts with protein kinase-inactive mutants of IRAK1 and IRAK4. Isoform 1 interacts with isoform 2; the interaction occurs in late endosomes and disrupts the interaction between isoform 1 and TICAM1. Interacts with MYD88; the interaction decreases after IL-18 stimulation in a time-dependent manner. Interacts with IL18R1 and IL18RAP. Interacts with TLR2. Interacts with RAB11FIP2. In terms of processing, phosphorylated by PRKCE in response to LPS. Phosphorylation is essential for its function. It is depleted from the membrane upon phosphorylation. Tyrosine phosphorylation is inhibited by phosphatase PTPN4. Isoform 1 is myristoylated. Required for membrane association which is critical for its ability to initiate efficient signaling. In terms of tissue distribution, expressed in spleen, prostate, testis, uterus, small intestine, colon, peripheral blood leukocytes, heart, placenta, lung, liver, skeletal muscle, and pancreas Isoform 2 is ubiquitously expressed (at lower levels than isoform 1).

The protein localises to the cytoplasm. The protein resides in the golgi apparatus. Its subcellular location is the cell membrane. It is found in the endoplasmic reticulum. It localises to the early endosome membrane. The protein localises to the late endosome membrane. The protein resides in the cell projection. Its subcellular location is the phagocytic cup. Functions as a sorting adapter in different signaling pathways to facilitate downstream signaling leading to type I interferon induction. In TLR4 signaling, physically bridges TLR4 and TICAM1 and functionally transmits signal to TICAM1 in early endosomes after endocytosis of TLR4. In TLR2 signaling, physically bridges TLR2 and MYD88 and is required for the TLR2-dependent movement of MYD88 to endosomes following ligand engagement. Involved in IL-18 signaling and is proposed to function as a sorting adapter for MYD88 in IL-18 signaling during adaptive immune response. Forms a complex with RAB11FIP2 that is recruited to the phagosomes to promote the activation of the actin-regulatory GTPases RAC1 and CDC42 and subsequent phagocytosis of Gram-negative bacteria. In terms of biological role, proposed to inhibit LPS-TLR4 signaling at the late endosome by interaction with isoform 1 thereby disrupting the association of isoform 1 with TICAM1. May be involved in TLR4 degradation in late endosomes. This is TIR domain-containing adapter molecule 2 (TICAM2) from Homo sapiens (Human).